A 120-amino-acid polypeptide reads, in one-letter code: NAD(P)H-quinone oxidoreductase subunit 3, chloroplastic (120 aa).

3 helical membrane-spanning segments follow: residues 9–29 (IFWAFLIISSVIPILAFLISG), 64–84 (MFALVFVVFDVETVFLYPWAM), and 88–108 (VLGVPVFIEALIFVLILIVGS).

This sequence belongs to the complex I subunit 3 family. In terms of assembly, NDH is composed of at least 16 different subunits, 5 of which are encoded in the nucleus.

The protein localises to the plastid. It localises to the chloroplast thylakoid membrane. The catalysed reaction is a plastoquinone + NADH + (n+1) H(+)(in) = a plastoquinol + NAD(+) + n H(+)(out). It carries out the reaction a plastoquinone + NADPH + (n+1) H(+)(in) = a plastoquinol + NADP(+) + n H(+)(out). NDH shuttles electrons from NAD(P)H:plastoquinone, via FMN and iron-sulfur (Fe-S) centers, to quinones in the photosynthetic chain and possibly in a chloroplast respiratory chain. The immediate electron acceptor for the enzyme in this species is believed to be plastoquinone. Couples the redox reaction to proton translocation, and thus conserves the redox energy in a proton gradient. The chain is NAD(P)H-quinone oxidoreductase subunit 3, chloroplastic from Platanus occidentalis (Sycamore).